The following is a 63-amino-acid chain: Large ribosomal subunit protein bL32 (63 aa).

The tract at residues 1 to 23 is disordered; it reads MATPKAKVSKSRRDKRRAQFTAR. The span at 7-18 shows a compositional bias: basic residues; that stretch reads KVSKSRRDKRRA.

This sequence belongs to the bacterial ribosomal protein bL32 family.

The polypeptide is Large ribosomal subunit protein bL32 (Prosthecochloris aestuarii (strain DSM 271 / SK 413)).